The sequence spans 385 residues: 1-deoxy-D-xylulose 5-phosphate reductoisomerase (385 aa).

6 residues coordinate NADPH: Thr10, Gly11, Ser12, Ile13, Lys37, and Asn124. 1-deoxy-D-xylulose 5-phosphate is bound at residue Lys125. Glu126 lines the NADPH pocket. Mn(2+) is bound at residue Asp150. Residues Ser151, Glu152, Ser176, and His199 each coordinate 1-deoxy-D-xylulose 5-phosphate. Position 152 (Glu152) interacts with Mn(2+). Gly205 lines the NADPH pocket. The 1-deoxy-D-xylulose 5-phosphate site is built by Ser212, Asn217, Lys218, and Glu221. Glu221 serves as a coordination point for Mn(2+).

Belongs to the DXR family. The cofactor is Mg(2+). Mn(2+) serves as cofactor.

The enzyme catalyses 2-C-methyl-D-erythritol 4-phosphate + NADP(+) = 1-deoxy-D-xylulose 5-phosphate + NADPH + H(+). It functions in the pathway isoprenoid biosynthesis; isopentenyl diphosphate biosynthesis via DXP pathway; isopentenyl diphosphate from 1-deoxy-D-xylulose 5-phosphate: step 1/6. Its function is as follows. Catalyzes the NADPH-dependent rearrangement and reduction of 1-deoxy-D-xylulose-5-phosphate (DXP) to 2-C-methyl-D-erythritol 4-phosphate (MEP). The sequence is that of 1-deoxy-D-xylulose 5-phosphate reductoisomerase from Clostridium novyi (strain NT).